A 247-amino-acid polypeptide reads, in one-letter code: 2,3-bisphosphoglycerate-dependent phosphoglycerate mutase (247 aa).

Residues 8 to 15 (RHGESQWN), 21 to 22 (TG), Arg60, 87 to 90 (ERHY), Lys98, 114 to 115 (RR), and 183 to 184 (GN) each bind substrate. His9 acts as the Tele-phosphohistidine intermediate in catalysis. Glu87 functions as the Proton donor/acceptor in the catalytic mechanism.

Belongs to the phosphoglycerate mutase family. BPG-dependent PGAM subfamily.

It catalyses the reaction (2R)-2-phosphoglycerate = (2R)-3-phosphoglycerate. It functions in the pathway carbohydrate degradation; glycolysis; pyruvate from D-glyceraldehyde 3-phosphate: step 3/5. Catalyzes the interconversion of 2-phosphoglycerate and 3-phosphoglycerate. This chain is 2,3-bisphosphoglycerate-dependent phosphoglycerate mutase, found in Chlorobium limicola (strain DSM 245 / NBRC 103803 / 6330).